The following is a 140-amino-acid chain: Nucleoside diphosphate kinase (140 aa).

Residues K9, F57, R85, T91, R102, and N112 each coordinate ATP. Residue H115 is the Pros-phosphohistidine intermediate of the active site.

It belongs to the NDK family. Homotetramer. It depends on Mg(2+) as a cofactor.

It is found in the cytoplasm. The catalysed reaction is a 2'-deoxyribonucleoside 5'-diphosphate + ATP = a 2'-deoxyribonucleoside 5'-triphosphate + ADP. It catalyses the reaction a ribonucleoside 5'-diphosphate + ATP = a ribonucleoside 5'-triphosphate + ADP. Its function is as follows. Major role in the synthesis of nucleoside triphosphates other than ATP. The ATP gamma phosphate is transferred to the NDP beta phosphate via a ping-pong mechanism, using a phosphorylated active-site intermediate. In Chlorobium luteolum (strain DSM 273 / BCRC 81028 / 2530) (Pelodictyon luteolum), this protein is Nucleoside diphosphate kinase.